Reading from the N-terminus, the 395-residue chain is Chalcone synthase (395 aa).

Cysteine 164 is an active-site residue.

This sequence belongs to the thiolase-like superfamily. Chalcone/stilbene synthases family.

The enzyme catalyses (E)-4-coumaroyl-CoA + 3 malonyl-CoA + 3 H(+) = 2',4,4',6'-tetrahydroxychalcone + 3 CO2 + 4 CoA. Its pathway is secondary metabolite biosynthesis; flavonoid biosynthesis. Its function is as follows. The primary product of this enzyme is 4,2',4',6'-tetrahydroxychalcone (also termed naringenin-chalcone or chalcone) which can under specific conditions spontaneously isomerize into naringenin. This is Chalcone synthase (CHS) from Betula pendula (European white birch).